A 266-amino-acid polypeptide reads, in one-letter code: MLTFIGLGLFDEYDISLKGLEAIREADMVYAEFYTSCLMGTNLEKMEKLYGKKVFLLSREDVEQHPDWLSKAKNRNLCFLTGGDTMVSTTHVDLRLRAEKLGIDTRLIHGASIASAVSGLTGLQNYRFGKSASIPHPYESRRGTRIISETPYDTIKQNLELGLHTLVFLDIDKEKGYMTVNTALELLLEVEEKRGEGIMRGAAAVGIARAGSEKPVIRADYAENLKDFNFGKPLHILVIPGKLHFLEAEALVKLAGGPVGFMKEVE.

S-adenosyl-L-methionine contacts are provided by residues leucine 9, aspartate 84, valine 87, 112–113, leucine 169, alanine 210, and histidine 235; that span reads SI.

This sequence belongs to the diphthine synthase family. In terms of assembly, homodimer.

The catalysed reaction is 2-[(3S)-amino-3-carboxypropyl]-L-histidyl-[translation elongation factor 2] + 3 S-adenosyl-L-methionine = diphthine-[translation elongation factor 2] + 3 S-adenosyl-L-homocysteine + 3 H(+). It participates in protein modification; peptidyl-diphthamide biosynthesis. Its function is as follows. S-adenosyl-L-methionine-dependent methyltransferase that catalyzes the trimethylation of the amino group of the modified target histidine residue in translation elongation factor 2 (EF-2), to form an intermediate called diphthine. The three successive methylation reactions represent the second step of diphthamide biosynthesis. In Methanosarcina barkeri (strain Fusaro / DSM 804), this protein is Diphthine synthase.